An 86-amino-acid chain; its full sequence is Serine protease inhibitor Kazal-type 4 (86 aa).

The first 26 residues, 1–26 (MAMHLWLVTLTLVPLLGMDRELMVSA), serve as a signal peptide directing secretion. The 56-residue stretch at 31–86 (FPRMPFCEHMAELPNCPQTPNLICGTDGLTYENECHLCLTRMKTMKDIQIMKDGQC) folds into the Kazal-like domain. 3 disulfide bridges follow: C37/C68, C46/C65, and C54/C86.

Expressed in the intestinal tract.

The protein localises to the secreted. This chain is Serine protease inhibitor Kazal-type 4 (Spink4), found in Mus musculus (Mouse).